A 57-amino-acid polypeptide reads, in one-letter code: uncharacterized protein (57 aa).

A helical membrane pass occupies residues 4–26 (FMPIRVFLYSYVIINSLLSSFFH).

Its subcellular location is the membrane. This is an uncharacterized protein from Saccharomyces cerevisiae (strain ATCC 204508 / S288c) (Baker's yeast).